We begin with the raw amino-acid sequence, 238 residues long: Lactate utilization protein A (238 aa).

It belongs to the LutA/YkgE family.

Functionally, is involved in L-lactate degradation and allows cells to grow with lactate as the sole carbon source. The chain is Lactate utilization protein A from Bacillus licheniformis (strain ATCC 14580 / DSM 13 / JCM 2505 / CCUG 7422 / NBRC 12200 / NCIMB 9375 / NCTC 10341 / NRRL NRS-1264 / Gibson 46).